The following is a 20-amino-acid chain: Maximin-Ht (20 aa).

It belongs to the bombinin family. In terms of tissue distribution, expressed by the skin glands.

It is found in the secreted. Its function is as follows. Has antimicrobial activity. The protein is Maximin-Ht of Bombina maxima (Giant fire-bellied toad).